Reading from the N-terminus, the 97-residue chain is MALTLQDVEHVARLARLRLSPAELEKMRDQLSNILDHFQMLQQIDVSAVPPTAQVTDLVNVLREDEIRPSLPHEQALANAPEQQDGMFRVRAIFEEE.

It belongs to the GatC family. As to quaternary structure, heterotrimer of A, B and C subunits.

The catalysed reaction is L-glutamyl-tRNA(Gln) + L-glutamine + ATP + H2O = L-glutaminyl-tRNA(Gln) + L-glutamate + ADP + phosphate + H(+). The enzyme catalyses L-aspartyl-tRNA(Asn) + L-glutamine + ATP + H2O = L-asparaginyl-tRNA(Asn) + L-glutamate + ADP + phosphate + 2 H(+). Its function is as follows. Allows the formation of correctly charged Asn-tRNA(Asn) or Gln-tRNA(Gln) through the transamidation of misacylated Asp-tRNA(Asn) or Glu-tRNA(Gln) in organisms which lack either or both of asparaginyl-tRNA or glutaminyl-tRNA synthetases. The reaction takes place in the presence of glutamine and ATP through an activated phospho-Asp-tRNA(Asn) or phospho-Glu-tRNA(Gln). The sequence is that of Aspartyl/glutamyl-tRNA(Asn/Gln) amidotransferase subunit C from Roseiflexus sp. (strain RS-1).